The following is a 700-amino-acid chain: Elongation factor G (700 aa).

Positions N10–L286 constitute a tr-type G domain. Residues A19–T26, D83–H87, and N137–D140 contribute to the GTP site.

This sequence belongs to the TRAFAC class translation factor GTPase superfamily. Classic translation factor GTPase family. EF-G/EF-2 subfamily.

Its subcellular location is the cytoplasm. Catalyzes the GTP-dependent ribosomal translocation step during translation elongation. During this step, the ribosome changes from the pre-translocational (PRE) to the post-translocational (POST) state as the newly formed A-site-bound peptidyl-tRNA and P-site-bound deacylated tRNA move to the P and E sites, respectively. Catalyzes the coordinated movement of the two tRNA molecules, the mRNA and conformational changes in the ribosome. This chain is Elongation factor G, found in Rhodococcus erythropolis (strain PR4 / NBRC 100887).